A 760-amino-acid polypeptide reads, in one-letter code: NAD(P)H-quinone oxidoreductase subunit 5, chloroplastic (760 aa).

16 helical membrane-spanning segments follow: residues 9-29 (WIIS…LLLF), 39-59 (IWAF…IDLF), 89-109 (IDPL…LVLV), 125-145 (FVYM…SNLI), 147-167 (IYIF…FWFT), 185-205 (GDFG…SFEF), 221-241 (NEVH…GAIA), 260-280 (TPIS…FLVA), 282-302 (LLPL…IGII), 329-349 (LGYT…FHLI), 356-376 (ALLF…VGYS), 398-418 (IAFL…CFWS), 429-449 (YSPI…FYMF), 556-576 (ILFP…IGIP), 620-640 (FSVS…KPIY), and 734-754 (FYLL…SSIF).

It belongs to the complex I subunit 5 family. As to quaternary structure, NDH is composed of at least 16 different subunits, 5 of which are encoded in the nucleus.

It localises to the plastid. Its subcellular location is the chloroplast thylakoid membrane. The catalysed reaction is a plastoquinone + NADH + (n+1) H(+)(in) = a plastoquinol + NAD(+) + n H(+)(out). The enzyme catalyses a plastoquinone + NADPH + (n+1) H(+)(in) = a plastoquinol + NADP(+) + n H(+)(out). In terms of biological role, NDH shuttles electrons from NAD(P)H:plastoquinone, via FMN and iron-sulfur (Fe-S) centers, to quinones in the photosynthetic chain and possibly in a chloroplast respiratory chain. The immediate electron acceptor for the enzyme in this species is believed to be plastoquinone. Couples the redox reaction to proton translocation, and thus conserves the redox energy in a proton gradient. The chain is NAD(P)H-quinone oxidoreductase subunit 5, chloroplastic (ndhF) from Populus trichocarpa (Western balsam poplar).